The sequence spans 642 residues: ATP-dependent zinc metalloprotease FtsH (642 aa).

The Cytoplasmic portion of the chain corresponds to 1-6 (MGRFTK). A helical membrane pass occupies residues 7–27 (NIVLYLLIIAAFVIAIDAFSG). The Extracellular portion of the chain corresponds to 28 to 101 (QSANKSELSY…TAAPPEQPAW (74 aa)). Residues 102–122 (WMSLLGSAIPIIILVVLFFFI) traverse the membrane as a helical segment. Topologically, residues 123-642 (MQQTQGGGGR…LSEASSNEIK (520 aa)) are cytoplasmic. Residue 194–201 (GPPGTGKT) participates in ATP binding. A Zn(2+)-binding site is contributed by H416. E417 is a catalytic residue. Zn(2+) contacts are provided by H420 and D492. The span at 597-610 (TTKEPEAEEPKVAS) shows a compositional bias: basic and acidic residues. The interval 597 to 642 (TTKEPEAEEPKVASEADSSIVPEGVDAKKTTSTVADLSEASSNEIK) is disordered. Over residues 626-642 (TTSTVADLSEASSNEIK) the composition is skewed to polar residues.

In the central section; belongs to the AAA ATPase family. It in the C-terminal section; belongs to the peptidase M41 family. In terms of assembly, homohexamer. Zn(2+) is required as a cofactor.

Its subcellular location is the cell membrane. Its function is as follows. Acts as a processive, ATP-dependent zinc metallopeptidase for both cytoplasmic and membrane proteins. Plays a role in the quality control of integral membrane proteins. The chain is ATP-dependent zinc metalloprotease FtsH from Veillonella parvula (strain ATCC 10790 / DSM 2008 / CCUG 5123 / JCM 12972 / NCTC 11810 / Te3) (Veillonella alcalescens).